Here is a 603-residue protein sequence, read N- to C-terminus: Probable GMP synthase [glutamine-hydrolyzing] (603 aa).

The 190-residue stretch at 6–195 folds into the Glutamine amidotransferase type-1 domain; the sequence is KIAVVDFGGQ…FIQICGVSKT (190 aa). Residue Cys-81 is the Nucleophile of the active site. Residues His-170 and Glu-172 contribute to the active site. The 197-residue stretch at 196–392 folds into the GMPS ATP-PPase domain; sequence WGIDQFLKEK…LGLESEWVGR (197 aa). 224 to 230 is an ATP binding site; it reads SGGVDST.

Homodimer.

It carries out the reaction XMP + L-glutamine + ATP + H2O = GMP + L-glutamate + AMP + diphosphate + 2 H(+). It functions in the pathway purine metabolism; GMP biosynthesis; GMP from XMP (L-Gln route): step 1/1. In terms of biological role, catalyzes the synthesis of GMP from XMP. The chain is Probable GMP synthase [glutamine-hydrolyzing] (guaA) from Leptospira interrogans serogroup Icterohaemorrhagiae serovar copenhageni (strain Fiocruz L1-130).